The following is a 278-amino-acid chain: Small ribosomal subunit protein uS9m (278 aa).

The transit peptide at 1–10 (MFSRLSLFRR) directs the protein to the mitochondrion. The tract at residues 259-278 (VERKKPGKKKARKMPTWVKR) is disordered.

The protein belongs to the universal ribosomal protein uS9 family. As to quaternary structure, component of the mitochondrial small ribosomal subunit (mt-SSU). Mature yeast 74S mitochondrial ribosomes consist of a small (37S) and a large (54S) subunit. The 37S small subunit contains a 15S ribosomal RNA (15S mt-rRNA) and 34 different proteins. The 54S large subunit contains a 21S rRNA (21S mt-rRNA) and 46 different proteins.

It is found in the mitochondrion. Functionally, component of the mitochondrial ribosome (mitoribosome), a dedicated translation machinery responsible for the synthesis of mitochondrial genome-encoded proteins, including at least some of the essential transmembrane subunits of the mitochondrial respiratory chain. The mitoribosomes are attached to the mitochondrial inner membrane and translation products are cotranslationally integrated into the membrane. This Saccharomyces cerevisiae (strain ATCC 204508 / S288c) (Baker's yeast) protein is Small ribosomal subunit protein uS9m (MRPS9).